Consider the following 783-residue polypeptide: MPSQFNDNFVATDDDVGTMARVGMALDRELNGDSFQDNLNFQPRSGKREDFEPFFQDTPNTKSLSKHFHDFTMNASLETLPSVEKPRGRNMNAFEETSWNRFRKNGSLFPLSSPPISEPDLRPQALNETPDYRNRFLGAFKKQGVLDDHGNLKLDASPSFLKKPAEYTPLANRQNQNLAFDSPTEALPPKPTTPWRRNGFRSKTTPNLNSGKETPSSYKASARLMEQLGLNHSEPSVDFNNQTSYRLPNLTNLSSLIRDDTIDENGNAKEHDRLPELNTIPVASTDEQLFNAHQLLEKKFEILKRERNECNAKIDELQDKLELLTDAYNREKRRARSLEERMSKEMLTKLGESNVDDGMAASRYDTVKREKERLSEHLKSLQEQYEHIQSVYKNVLLDRESYIMRLGNKISENNELLNENRVLKEKLQTYLDKKESNVTSKIKSTAENSSKPLSMNEADERKDGLNNLLFENKSGANTKEMSNGTETAKENCSPQQDSTSPTSGYQDLVKELAKEIEMRKSLELKLKLSQSNKAGPVKHRKRRPKSKRRITGKVVFDSPNVASGVESDEGSEEISLDSEYSDILSDDGDFEKEKQATLPRRRSSSSMKGNKLAEDSYLNEAGFDWNQGTFHNGSEFGTTGVPDEPNEEELPKHVLKQVEHIINESAAHGVGKCNACHARQEDLIRGEQKVSHSNCLYADQTLRPSQPPSEALKTVVNQLTNELMELKKRYEKLSDRYNSLTPGYHKHKRQEIKNKLIKLIECMESKSDQIYLLYDVNVGKDFS.

Phosphoserine is present on Ser-157. Disordered regions lie at residues 180–216 (FDSP…ETPS), 434–458 (KESN…MNEA), 471–504 (ENKS…PTSG), and 528–610 (LSQS…MKGN). 3 stretches are compositionally biased toward polar residues: residues 201-216 (RSKT…ETPS), 437-453 (NVTS…SKPL), and 474-504 (SGAN…PTSG). Residues 536–551 (PVKHRKRRPKSKRRIT) show a composition bias toward basic residues. The segment covering 566-590 (ESDEGSEEISLDSEYSDILSDDGDF) has biased composition (acidic residues).

The protein localises to the cytoplasm. The protein resides in the cytoskeleton. It localises to the microtubule organizing center. Its subcellular location is the spindle pole body. Functionally, has a role in meiosis. This chain is Spindle pole body protein ppc89 (ppc89), found in Schizosaccharomyces pombe (strain 972 / ATCC 24843) (Fission yeast).